A 361-amino-acid polypeptide reads, in one-letter code: MISKDEILEIFDKYNKDEITIATLGSHTSLHILKGAKLEGFSTVCITMKGRDVPYKRFKVADKFIYVDNFSDIKNEEIQEKLRELNSIVVPHGSFIAYCGLDNVENSFLVPMFGNRRILRWESERSLEGKLLREAGLRVPKKYESPEDIDGTVIVKFPGARGGRGYFIASSTEEFYKKAEDLKKRGILTDEDIANAHIEEYVVGTNFCIHYFYSPLKDEVELLGMDKRYESNIDGLVRIPAKDQLEMNINPSYVITGNIPVVIRESLLPQVFEMGDKLVAKAKELVPPGMIGPFCLQSLCNENLELVVFEMSARVDGGTNSFMNGGPYSFLYNGEPLSMGQRIAREIKMALQLDMIDKIIS.

2 residues coordinate 5-amino-1-(5-phospho-beta-D-ribosyl)imidazole-4-carboxamide: H27 and S94. The region spanning 116–348 (RRILRWESER…MGQRIAREIK (233 aa)) is the ATP-grasp domain. Residues 156-166 (KFPGARGGRGY), 199-202 (EEYV), and E230 contribute to the ATP site. Residue N258 coordinates 5-amino-1-(5-phospho-beta-D-ribosyl)imidazole-4-carboxamide. Q297 and E310 together coordinate Mg(2+).

It belongs to the phosphohexose mutase family. As to quaternary structure, homohexamer. Dimer of trimers. The cofactor is Mg(2+). Requires Mn(2+) as cofactor.

The enzyme catalyses 5-amino-1-(5-phospho-beta-D-ribosyl)imidazole-4-carboxamide + formate + ATP = 5-formamido-1-(5-phospho-D-ribosyl)imidazole-4-carboxamide + ADP + phosphate. Its pathway is purine metabolism; IMP biosynthesis via de novo pathway; 5-formamido-1-(5-phospho-D-ribosyl)imidazole-4-carboxamide from 5-amino-1-(5-phospho-D-ribosyl)imidazole-4-carboxamide (formate route): step 1/1. Inhibited by ADP. Functionally, catalyzes the ATP- and formate-dependent formylation of 5-aminoimidazole-4-carboxamide-1-beta-d-ribofuranosyl 5'-monophosphate (AICAR) to 5-formaminoimidazole-4-carboxamide-1-beta-d-ribofuranosyl 5'-monophosphate (FAICAR) in the absence of folates. In Methanocaldococcus jannaschii (strain ATCC 43067 / DSM 2661 / JAL-1 / JCM 10045 / NBRC 100440) (Methanococcus jannaschii), this protein is 5-formaminoimidazole-4-carboxamide-1-(beta)-D-ribofuranosyl 5'-monophosphate synthetase.